A 295-amino-acid polypeptide reads, in one-letter code: Phosphoribosylaminoimidazole-succinocarboxamide synthase (295 aa).

Belongs to the SAICAR synthetase family.

It catalyses the reaction 5-amino-1-(5-phospho-D-ribosyl)imidazole-4-carboxylate + L-aspartate + ATP = (2S)-2-[5-amino-1-(5-phospho-beta-D-ribosyl)imidazole-4-carboxamido]succinate + ADP + phosphate + 2 H(+). Its pathway is purine metabolism; IMP biosynthesis via de novo pathway; 5-amino-1-(5-phospho-D-ribosyl)imidazole-4-carboxamide from 5-amino-1-(5-phospho-D-ribosyl)imidazole-4-carboxylate: step 1/2. This is Phosphoribosylaminoimidazole-succinocarboxamide synthase from Desulforapulum autotrophicum (strain ATCC 43914 / DSM 3382 / VKM B-1955 / HRM2) (Desulfobacterium autotrophicum).